Reading from the N-terminus, the 243-residue chain is Ribonuclease PH (243 aa).

Residues arginine 91 and 129-131 (GTR) contribute to the phosphate site.

Belongs to the RNase PH family. Homohexameric ring arranged as a trimer of dimers.

It carries out the reaction tRNA(n+1) + phosphate = tRNA(n) + a ribonucleoside 5'-diphosphate. Functionally, phosphorolytic 3'-5' exoribonuclease that plays an important role in tRNA 3'-end maturation. Removes nucleotide residues following the 3'-CCA terminus of tRNAs; can also add nucleotides to the ends of RNA molecules by using nucleoside diphosphates as substrates, but this may not be physiologically important. Probably plays a role in initiation of 16S rRNA degradation (leading to ribosome degradation) during starvation. The protein is Ribonuclease PH of Burkholderia pseudomallei (strain 668).